Here is a 127-residue protein sequence, read N- to C-terminus: Large-conductance mechanosensitive channel (127 aa).

3 helical membrane-spanning segments follow: residues 19-39 (VGVIVGAAFTAIVNSLVTNII), 42-62 (LLGIFVGSIDFSNLVFTVGSA), and 67-87 (GAFINSVINFLIIAFVVFLLI).

This sequence belongs to the MscL family. In terms of assembly, homopentamer.

The protein localises to the cell membrane. Channel that opens in response to stretch forces in the membrane lipid bilayer. May participate in the regulation of osmotic pressure changes within the cell. This Levilactobacillus brevis (strain ATCC 367 / BCRC 12310 / CIP 105137 / JCM 1170 / LMG 11437 / NCIMB 947 / NCTC 947) (Lactobacillus brevis) protein is Large-conductance mechanosensitive channel.